The sequence spans 220 residues: Protein-methionine-sulfoxide reductase heme-binding subunit MsrQ (220 aa).

A run of 6 helical transmembrane segments spans residues 20–40 (LWLL…LGAT), 52–72 (EHLL…VTPI), 86–106 (ALGL…MVLD), 122–142 (PFIT…LTSN), 153–173 (WSSL…HFLM), and 175–195 (VKSW…LLLW).

This sequence belongs to the MsrQ family. Heterodimer of a catalytic subunit (MsrP) and a heme-binding subunit (MsrQ). The cofactor is FMN. It depends on heme b as a cofactor.

The protein resides in the cell inner membrane. Its function is as follows. Part of the MsrPQ system that repairs oxidized periplasmic proteins containing methionine sulfoxide residues (Met-O), using respiratory chain electrons. Thus protects these proteins from oxidative-stress damage caused by reactive species of oxygen and chlorine generated by the host defense mechanisms. MsrPQ is essential for the maintenance of envelope integrity under bleach stress, rescuing a wide series of structurally unrelated periplasmic proteins from methionine oxidation. MsrQ provides electrons for reduction to the reductase catalytic subunit MsrP, using the quinone pool of the respiratory chain. The polypeptide is Protein-methionine-sulfoxide reductase heme-binding subunit MsrQ (Brucella abortus (strain S19)).